The chain runs to 793 residues: Sucrose synthase (793 aa).

A GT-B glycosyltransferase region spans residues 263–742 (MISRILIVSI…ALARVAERYT (480 aa)).

Belongs to the glycosyltransferase 1 family. In terms of assembly, homotetramer.

It catalyses the reaction an NDP-alpha-D-glucose + D-fructose = a ribonucleoside 5'-diphosphate + sucrose + H(+). It carries out the reaction ADP-alpha-D-glucose + D-fructose = sucrose + ADP + H(+). Catalyzes the reversible conversion of sucrose and a nucleotide disphosphate (NDP) into fructose and NDP-glucose; although the reaction is freely reversible in vitro, the physiological reaction seems to be sucrose cleavage. Unlike characterized plant enzymes prefers ADP as a cosubstrate, whereas plants prefer UDP. The KM for sucrose is 45-fold lower in the presence of ADP than UDP. Its preference for ADP over UDP suggests it may directly link sucrose and glycogen metabolism. The sequence is that of Sucrose synthase from Acidithiobacillus caldus (strain ATCC 51756 / DSM 8584 / KU).